The sequence spans 365 residues: tRNA/tmRNA (uracil-C(5))-methyltransferase (365 aa).

Residues glutamine 189, tyrosine 217, asparagine 222, glutamate 238, and aspartate 298 each contribute to the S-adenosyl-L-methionine site. Cysteine 323 serves as the catalytic Nucleophile. Glutamate 357 serves as the catalytic Proton acceptor.

It belongs to the class I-like SAM-binding methyltransferase superfamily. RNA M5U methyltransferase family. TrmA subfamily.

It catalyses the reaction uridine(54) in tRNA + S-adenosyl-L-methionine = 5-methyluridine(54) in tRNA + S-adenosyl-L-homocysteine + H(+). The catalysed reaction is uridine(341) in tmRNA + S-adenosyl-L-methionine = 5-methyluridine(341) in tmRNA + S-adenosyl-L-homocysteine + H(+). Its function is as follows. Dual-specificity methyltransferase that catalyzes the formation of 5-methyluridine at position 54 (m5U54) in all tRNAs, and that of position 341 (m5U341) in tmRNA (transfer-mRNA). The sequence is that of tRNA/tmRNA (uracil-C(5))-methyltransferase from Shewanella sp. (strain W3-18-1).